The following is a 780-amino-acid chain: MTHEEHHAAKTLGIGKAIAVLTSGGDAQGMNAAVRAVVRVGIFTGARVFFVHEGYQGLVDGGDHIKEATWESVSMMLQLGGTVIGSARCKDFREREGRLRAAYNLVKRGITNLCVIGGDGSLTGADTFRSEWSDLLSDLQKAGKITDEEATKSSYLNIVGLVGSIDNDFCGTDMTIGTDSALHRIMEIVDAITTTAQSHQRTFVLEVMGRHCGYLALVTSLSCGADWVFIPECPPDDDWEEHLCRRLSETRTRGSRLNIIIVAEGAIDKNGKPITSEDIKNLVVKRLGYDTRVTVLGHVQRGGTPSAFDRILGSRMGVEAVMALLEGTPDTPACVVSLSGNQAVRLPLMECVQVTKDVTKAMDEKKFDEALKLRGRSFMNNWEVYKLLAHVRPPVSKSGSHTVAVMNVGAPAAGMNAAVRSTVRIGLIQGNRVLVVHDGFEGLAKGQIEEAGWSYVGGWTGQGGSKLGTKRTLPKKSFEQISANITKFNIQGLVIIGGFEAYTGGLELMEGRKQFDELCIPFVVIPATVSNNVPGSDFSVGADTALNTICTTCDRIKQSAAGTKRRVFIIETMGGYCGYLATMAGLAAGADAAYIFEEPFTIRDLQANVEHLVQKMKTTVKRGLVLRNEKCNENYTTDFIFNLYSEEGKGIFDSRKNVLGHMQQGGSPTPFDRNFATKMGAKAMNWMSGKIKESYRNGRIFANTPDSGCVLGMRKRALVFQPVAELKDQTDFEHRIPKEQWWLKLRPILKILAKYEIDLDTSDHAHLEHITRKRSGEAAV.

The residue at position 2 (Thr2) is an N-acetylthreonine. The segment at Thr2–His390 is N-terminal catalytic PFK domain 1. Residues Gly25, Arg88–Cys89, and Gly118–Ser121 each bind ATP. Asp119 provides a ligand contact to Mg(2+). Phosphoserine is present on Ser133. Substrate contacts are provided by residues Ser164–Asp166, Arg201, Met208–Arg210, Glu264, Arg292, and His298–Arg301. Catalysis depends on Asp166, which acts as the Proton acceptor. Ser377 carries the phosphoserine modification. Residues Val391–His401 are interdomain linker. Residues Thr402–Val780 form a C-terminal regulatory PFK domain 2 region. Beta-D-fructose 2,6-bisphosphate-binding positions include Arg471 and Thr528 to Asn532. An O-linked (GlcNAc) serine glycan is attached at Ser530. At Lys557 the chain carries N6-(2-hydroxyisobutyryl)lysine. Residues Arg566, Met573–Gly575, Glu629, Arg655, and His661–Gln664 contribute to the beta-D-fructose 2,6-bisphosphate site. Ser667 carries the phosphoserine modification. Arg735 is a beta-D-fructose 2,6-bisphosphate binding site. Ser775 carries the post-translational modification Phosphoserine.

This sequence belongs to the phosphofructokinase type A (PFKA) family. ATP-dependent PFK group I subfamily. Eukaryotic two domain clade 'E' sub-subfamily. Homo- and heterotetramers. Phosphofructokinase (PFK) enzyme functions as a tetramer composed of different combinations of 3 types of subunits, called PFKM (where M stands for Muscle), PFKL (Liver) and PFKP (Platelet). The composition of the PFK tetramer differs according to the tissue type it is present in. In muscles, it is composed of 4 PFKM subunits (also called M4). In the liver, the predominant form is a tetramer of PFKL subunits (L4). In erythrocytes, both PFKM and PFKL subunits randomly tetramerize to form M4, L4 and other combinations (ML3, M2L2, M3L). The kinetic and regulatory properties of the tetrameric enzyme are dependent on the subunit composition, hence can vary across tissues. Interacts (via C-terminus) with HK1 (via N-terminal spermatogenic cell-specific region). Mg(2+) serves as cofactor. Post-translationally, glcNAcylation decreases enzyme activity.

The protein localises to the cytoplasm. It carries out the reaction beta-D-fructose 6-phosphate + ATP = beta-D-fructose 1,6-bisphosphate + ADP + H(+). Its pathway is carbohydrate degradation; glycolysis; D-glyceraldehyde 3-phosphate and glycerone phosphate from D-glucose: step 3/4. Its activity is regulated as follows. Allosterically activated by ADP, AMP, or fructose 2,6-bisphosphate, and allosterically inhibited by ATP or citrate. Functionally, catalyzes the phosphorylation of D-fructose 6-phosphate to fructose 1,6-bisphosphate by ATP, the first committing step of glycolysis. This chain is ATP-dependent 6-phosphofructokinase, muscle type (PFKM), found in Homo sapiens (Human).